A 288-amino-acid polypeptide reads, in one-letter code: Serine/threonine-protein acetyltransferase YopJ (288 aa).

Catalysis depends on residues His109 and Glu128. CoA is bound at residue His109. 167 to 168 serves as a coordination point for CoA; it reads RS. Cys172 is a catalytic residue. 1D-myo-inositol hexakisphosphate is bound by residues 182 to 185 and 224 to 225; these read KLYI and KH. Residue 227–230 coordinates CoA; that stretch reads QGKK. Arg257 is a binding site for 1D-myo-inositol hexakisphosphate. 266–270 is a CoA binding site; that stretch reads DGKEL.

Belongs to the acetyltransferase YopJ family. It depends on 1D-myo-inositol hexakisphosphate as a cofactor.

It is found in the secreted. The catalysed reaction is L-threonyl-[protein] + acetyl-CoA = O-acetyl-L-threonyl-[protein] + CoA. It catalyses the reaction L-seryl-[protein] + acetyl-CoA = O-acetyl-L-seryl-[protein] + CoA. Its activity is regulated as follows. 1D-myo-inositol hexakisphosphate activates protein-acetyltransferase activity via an allosteric mechanism: 1D-myo-inositol hexakisphosphate-binding induces a conformational rearrangement that stimulates the interaction with acetyl-CoA. Functionally, serine/threonine-protein acetyltransferase translocated into infected cells, which inhibits the host immune response and induces cell death by mediating acetylation of target proteins. Inhibits the MAPK and NF-kappa-B signaling pathways by acetylating protein-kinases such as MAP2K1, MAP2K6, MAP3K7/TAK1 and I-kappa-B kinase (CHUK/IKKA and IKBKB) on serine and threonine residues critical for their activation by phosphorylation, thereby preventing protein-kinase activation. Promotes pyroptosis, a programmed cell death, in host cells by mediating acetylation of MAP3K7/TAK1: MAP3K7/TAK1 inactivation triggers activation of caspase-8 (CASP8), followed by CASP8-dependent cleavage of gasdermin-D (GSDMD) and induction of pyroptosis. Also able to induce intestinal barrier dysfunction by acetylating and inhibiting host protein-kinases RIPK2/RICK and MAP3K7/TAK1, thereby promoting cell death. This chain is Serine/threonine-protein acetyltransferase YopJ, found in Yersinia pseudotuberculosis serotype I (strain IP32953).